The primary structure comprises 66 residues: Large ribosomal subunit protein bL31 (66 aa).

Positions 16, 18, 36, and 39 each coordinate Zn(2+).

The protein belongs to the bacterial ribosomal protein bL31 family. Type A subfamily. In terms of assembly, part of the 50S ribosomal subunit. Zn(2+) is required as a cofactor.

In terms of biological role, binds the 23S rRNA. The protein is Large ribosomal subunit protein bL31 of Thermodesulfovibrio yellowstonii (strain ATCC 51303 / DSM 11347 / YP87).